A 1188-amino-acid chain; its full sequence is F-box only protein 38 (1188 aa).

The 46-residue stretch at 30 to 75 (MNQLSHEVLCHIFRYLPLQDIMCMECLSRKLKEAVTLYLRVVRVVD) folds into the F-box domain. The tract at residues 59–119 (KLKEAVTLYL…LHPRYLERRR (61 aa)) is interaction with KLF7. 3 short sequence motifs (nuclear export signal) span residues 194 to 201 (LHLVGVNV), 307 to 316 (LEVDLGYLII), and 451 to 460 (LLPSLEFISL). A disordered region spans residues 487-526 (ALVSNQNSNNDDNNAQNNNANIHDNNHHHPDDSDEENDFR). Positions 491-509 (NQNSNNDDNNAQNNNANIH) are enriched in low complexity. A Phosphothreonine modification is found at Thr-591. Residues Ser-598, Ser-600, and Ser-606 each carry the phosphoserine modification. Disordered stretches follow at residues 620–666 (RRYS…FPLE), 685–766 (MKAA…MEEG), and 787–909 (RTSR…STSD). Basic and acidic residues-rich tracts occupy residues 621–630 (RYSEREEKTG) and 685–699 (MKAA…KNKD). The span at 703–740 (SCSSTTASTVGNSSSHNTASQSPDFVRTVNSGGSSEPS) shows a compositional bias: polar residues. Phosphoserine is present on residues Ser-736 and Ser-740. Positions 787–798 (RTSRCSDEERPS) are enriched in basic and acidic residues. Polar residues predominate over residues 849–861 (SSQPESCDVQSNE). A compositionally biased stretch (basic residues) spans 889–900 (TKPRHAMKRKRT). Residues 896-899 (KRKR) carry the Nuclear localization signal motif.

Part of the SCF (SKP1-CUL1-F-box) E3 ubiquitin-protein ligase complex SCF(FBXO38) composed of CUL1, SKP1, RBX1 and FBXO38. Interacts with KLF7. Interacts with PDCD1/PD-1.

It localises to the cytoplasm. It is found in the cytosol. Its subcellular location is the nucleus. It participates in protein modification; protein ubiquitination. Functionally, substrate recognition component of a SCF (SKP1-CUL1-F-box protein) E3 ubiquitin-protein ligase complex which mediates the ubiquitination and subsequent proteasomal degradation of PDCD1/PD-1, thereby regulating T-cells-mediated immunity. Required for anti-tumor activity of T-cells by promoting the degradation of PDCD1/PD-1; the PDCD1-mediated inhibitory pathway being exploited by tumors to attenuate anti-tumor immunity and facilitate tumor survival. May indirectly stimulate the activity of transcription factor KLF7, a regulator of neuronal differentiation, without promoting KLF7 ubiquitination. In Homo sapiens (Human), this protein is F-box only protein 38.